Consider the following 422-residue polypeptide: Mannosylglycerate synthase (422 aa).

Residues 7–11, glutamine 66, lysine 77, aspartate 101, and 101–102 contribute to the GDP-alpha-D-mannose site; these read PFKEE and DS. Residues arginine 132 and 137–140 each bind (R)-glycerate; that span reads AMIT. Residues leucine 164, aspartate 193, and tyrosine 221 each contribute to the GDP-alpha-D-mannose site.

This sequence belongs to the glycosyltransferase 78 family.

The enzyme catalyses (R)-glycerate + GDP-alpha-D-mannose = (2R)-2-O-(alpha-D-mannosyl)-glycerate + GDP + H(+). It carries out the reaction GDP-alpha-D-glucose + (R)-glycerate = (2R)-2-O-(alpha-D-glucopyranosyl)-glycerate + GDP + H(+). With respect to regulation, activity is not dependent on divalent cations, but it is enhanced by Mg(2+). In terms of biological role, involved in the biosynthesis of the compatible solute alpha-D-mannosyl-glycerate (MG). Catalyzes the condensation of GDP-alpha-D-mannose (GDP-Man) with D-glycerate to produce alpha-D-mannosyl-glycerate. Can also use GDP-alpha-D-glucose (GDP-Glc) as sugar donor to produce alpha-D-glucopyranosyl-glycerate (GG). The chain is Mannosylglycerate synthase from Selaginella moellendorffii (Spikemoss).